Consider the following 33-residue polypeptide: Photosystem II reaction center protein Psb30 (33 aa).

Residues 5-25 (IVAQLTVLALIVVSGPLVIAL) form a helical membrane-spanning segment.

Belongs to the Psb30/Ycf12 family. As to quaternary structure, PSII is composed of 1 copy each of membrane proteins PsbA, PsbB, PsbC, PsbD, PsbE, PsbF, PsbH, PsbI, PsbJ, PsbK, PsbL, PsbM, PsbT, PsbX, PsbY, PsbZ, Psb30/Ycf12, peripheral proteins of the oxygen-evolving complex and a large number of cofactors. It forms dimeric complexes.

The protein resides in the plastid. The protein localises to the chloroplast thylakoid membrane. A core subunit of photosystem II (PSII), probably helps stabilize the reaction center. This is Photosystem II reaction center protein Psb30 from Angiopteris evecta (Mule's foot fern).